A 445-amino-acid polypeptide reads, in one-letter code: Aminopeptidase C (445 aa).

Active-site residues include cysteine 69, histidine 363, and asparagine 385.

Belongs to the peptidase C1 family. Homohexamer.

It catalyses the reaction Inactivates bleomycin B2 (a cytotoxic glycometallopeptide) by hydrolysis of a carboxyamide bond of beta-aminoalanine, but also shows general aminopeptidase activity. The specificity varies somewhat with source, but amino acid arylamides of Met, Leu and Ala are preferred.. The chain is Aminopeptidase C (pepC) from Streptococcus thermophilus.